Consider the following 306-residue polypeptide: Non-specific ribonucleoside hydrolase RihC (306 aa).

His-235 is a catalytic residue.

Belongs to the IUNH family. RihC subfamily.

In terms of biological role, hydrolyzes both purine and pyrimidine ribonucleosides with a broad-substrate specificity. The chain is Non-specific ribonucleoside hydrolase RihC from Salmonella agona (strain SL483).